Consider the following 489-residue polypeptide: Cysteine--tRNA ligase (489 aa).

Residue Cys27 coordinates Zn(2+). The short motif at 29–39 (VTVYDLCHLGH) is the 'HIGH' region element. Residues Cys211, His236, and Glu240 each coordinate Zn(2+). Residues 268 to 272 (KMSKS) carry the 'KMSKS' region motif. Position 271 (Lys271) interacts with ATP.

This sequence belongs to the class-I aminoacyl-tRNA synthetase family. In terms of assembly, monomer. The cofactor is Zn(2+).

Its subcellular location is the cytoplasm. The catalysed reaction is tRNA(Cys) + L-cysteine + ATP = L-cysteinyl-tRNA(Cys) + AMP + diphosphate. The protein is Cysteine--tRNA ligase of Prochlorococcus marinus (strain MIT 9312).